The sequence spans 142 residues: Hemoglobin subunit theta-1 (142 aa).

Positions 2 to 142 (ALSAEDRALV…VISALASEYR (141 aa)) constitute a Globin domain. Histidine 59 and histidine 88 together coordinate heme b.

It belongs to the globin family.

This is Hemoglobin subunit theta-1 (HBQ1) from Pongo pygmaeus (Bornean orangutan).